Reading from the N-terminus, the 948-residue chain is FRIGIDA-like protein 5 (948 aa).

The stretch at 47–164 (DSTRSVLEER…VEKHRERIVA (118 aa)) forms a coiled coil. Disordered stretches follow at residues 447–500 (ESAQ…APSQ), 518–538 (VKESGADHQPDTIATHPSGTE), and 804–894 (RNTS…YPSH). 2 stretches are compositionally biased toward basic and acidic residues: residues 459–475 (SYEKRQSTTKGVEKSEA) and 518–527 (VKESGADHQP). Over residues 807-817 (SNGSGSGSASS) the composition is skewed to low complexity. Over residues 818-830 (KPDSTIKQSQTAK) the composition is skewed to polar residues. Basic residues predominate over residues 861–872 (FSKKNKRGKKRS). Polar residues predominate over residues 873-894 (MSGNNQSSGHIASHTSNHYPSH).

It belongs to the Frigida family. As to expression, expressed at low levels during seed development.

The chain is FRIGIDA-like protein 5 (FRL5) from Arabidopsis thaliana (Mouse-ear cress).